Reading from the N-terminus, the 471-residue chain is MNPNQKLFALSGVAIALSVMNLLIGISNVGLNVSLHLKEKGTKQEENLTCTTITQNNTTVVENTYVNNTTIITKEPDLKAPSYLLLNKSLCSVEGWVVIAKDNAIRFGESEQIIVTREPYVSCDPSGCKMYALHQGTTIRNKHSNGTIHDRTAFRGLISTPLGTPPTVSNSDFICVGWSSTSCHDGVGRMTICIQGNNDNATATVYYNRRLTTTIKPWARNILRTQESECVCHNGTCAVVMTDGSASSQAYTKVMYFHKGLVIKEEPLKGSAKHIEECSCYGHNQKITCVCRDNWQGANRPIIEIDMNTLEHTSRYVCTGILTDTSRPGDKPSGDCSNPITGSPSAPGVKGFGFLNGDNTWLGRTISPRSRSGFEMLKIPNAGTDPNSRIAERQEIVDNNNWSGYSGSFIDYWDDDNECYNPCFYVELIRGRPEEAKYVWWTSNSLIALCGSPFPVGSGSFPDGAQIQYFS.

The Intravirion segment spans residues 1 to 6; it reads MNPNQK. Residues 7–27 form a helical membrane-spanning segment; that stretch reads LFALSGVAIALSVMNLLIGIS. The interval 11-33 is involved in apical transport and lipid raft association; the sequence is SGVAIALSVMNLLIGISNVGLNV. Residues 28 to 471 lie on the Virion surface side of the membrane; that stretch reads NVGLNVSLHL…PDGAQIQYFS (444 aa). N-linked (GlcNAc...) asparagine; by host glycans are attached at residues N32, N47, N56, N57, N67, N68, and N87. Positions 36-87 are hypervariable stalk region; it reads HLKEKGTKQEENLTCTTITQNNTTVVENTYVNNTTIITKEPDLKAPSYLLLN. The segment at 90–471 is head of neuraminidase; that stretch reads LCSVEGWVVI…PDGAQIQYFS (382 aa). Cystine bridges form between C91–C419, C123–C128, C183–C230, C232–C237, C278–C291, C280–C289, C318–C336, and C423–C450. R117 serves as a coordination point for substrate. N145 carries an N-linked (GlcNAc...) asparagine; by host glycan. The active-site Proton donor/acceptor is the D150. R151 contributes to the substrate binding site. N-linked (GlcNAc...) asparagine; by host glycosylation is found at N200 and N234. 276 to 277 provides a ligand contact to substrate; sequence EE. A substrate-binding site is contributed by R292. Residues D293, G297, and D324 each contribute to the Ca(2+) site. Residue R371 participates in substrate binding. N-linked (GlcNAc...) asparagine; by host glycosylation is present at N401. Y405 serves as the catalytic Nucleophile.

This sequence belongs to the glycosyl hydrolase 34 family. Homotetramer. The cofactor is Ca(2+). Post-translationally, N-glycosylated.

It is found in the virion membrane. It localises to the host apical cell membrane. The enzyme catalyses Hydrolysis of alpha-(2-&gt;3)-, alpha-(2-&gt;6)-, alpha-(2-&gt;8)- glycosidic linkages of terminal sialic acid residues in oligosaccharides, glycoproteins, glycolipids, colominic acid and synthetic substrates.. Its activity is regulated as follows. Inhibited by the neuraminidase inhibitors zanamivir (Relenza) and oseltamivir (Tamiflu). These drugs interfere with the release of progeny virus from infected cells and are effective against all influenza strains. Resistance to neuraminidase inhibitors is quite rare. Functionally, catalyzes the removal of terminal sialic acid residues from viral and cellular glycoconjugates. Cleaves off the terminal sialic acids on the glycosylated HA during virus budding to facilitate virus release. Additionally helps virus spread through the circulation by further removing sialic acids from the cell surface. These cleavages prevent self-aggregation and ensure the efficient spread of the progeny virus from cell to cell. Otherwise, infection would be limited to one round of replication. Described as a receptor-destroying enzyme because it cleaves a terminal sialic acid from the cellular receptors. May facilitate viral invasion of the upper airways by cleaving the sialic acid moieties on the mucin of the airway epithelial cells. Likely to plays a role in the budding process through its association with lipid rafts during intracellular transport. May additionally display a raft-association independent effect on budding. Plays a role in the determination of host range restriction on replication and virulence. Sialidase activity in late endosome/lysosome traffic seems to enhance virus replication. The sequence is that of Neuraminidase from Influenza A virus (strain A/Duck/Germany/1949 H10N7).